The sequence spans 198 residues: Glycerol-3-phosphate acyltransferase (198 aa).

Helical transmembrane passes span M1–F21, W50–A70, N77–L97, M111–L131, I136–I156, and G157–K177.

It belongs to the PlsY family. Probably interacts with PlsX.

The protein localises to the cell inner membrane. It catalyses the reaction an acyl phosphate + sn-glycerol 3-phosphate = a 1-acyl-sn-glycero-3-phosphate + phosphate. The protein operates within lipid metabolism; phospholipid metabolism. Catalyzes the transfer of an acyl group from acyl-phosphate (acyl-PO(4)) to glycerol-3-phosphate (G3P) to form lysophosphatidic acid (LPA). This enzyme utilizes acyl-phosphate as fatty acyl donor, but not acyl-CoA or acyl-ACP. This chain is Glycerol-3-phosphate acyltransferase, found in Prochlorococcus marinus subsp. pastoris (strain CCMP1986 / NIES-2087 / MED4).